The primary structure comprises 509 residues: Solute carrier family 2, facilitated glucose transporter member 4 (509 aa).

The Cytoplasmic portion of the chain corresponds to 1–23 (MPSGFQQIGSDDGEPPRQRVTGT). An interaction with SRFBP1 region spans residues 7–13 (QIGSDDG). Position 10 is a phosphoserine (Ser-10). The chain crosses the membrane as a helical span at residues 24-44 (LVLAVFSAVLGSLQFGYNIGV). Residues 45 to 80 (INAPQKVIEQSYNATWLGRQGPGGPDSIPQGTLTTL) are Extracellular-facing. Residue Asn-57 is glycosylated (N-linked (GlcNAc...) asparagine). Residues 81–101 (WALSVAIFSVGGMISSFLIGI) traverse the membrane as a helical segment. Residues 102 to 110 (ISQWLGRKR) are Cytoplasmic-facing. The helical transmembrane segment at 111-131 (AMLANNVLAVLGGALMGLANA) threads the bilayer. Topologically, residues 132-141 (AASYEILILG) are extracellular. Residues 142-162 (RFLIGAYSGLTSGLVPMYVGE) traverse the membrane as a helical segment. The Cytoplasmic segment spans residues 163-170 (IAPTHLRG). Residues 171 to 191 (ALGTLNQLAIVIGILVAQVLG) form a helical membrane-spanning segment. Residue Gln-177 participates in D-glucose binding. The Extracellular portion of the chain corresponds to 192 to 200 (LESMLGTAT). A helical transmembrane segment spans residues 201-221 (LWPLLLALTVLPALLQLILLP). Topologically, residues 222–286 (FCPESPRYLY…QLLGSRTHRQ (65 aa)) are cytoplasmic. Residue Cys-223 is the site of S-palmitoyl cysteine attachment. Position 274 is a phosphoserine; by SGK1 (Ser-274). The chain crosses the membrane as a helical span at residues 287–307 (PLIIAVVLQLSQQLSGINAVF). D-glucose is bound by residues 298 to 299 (QQ) and Asn-304. Topologically, residues 308 to 322 (YYSTSIFESAGVGQP) are extracellular. Residues 323 to 343 (AYATIGAGVVNTVFTLVSVLL) traverse the membrane as a helical segment. D-glucose is bound at residue Asn-333. Residues 344 to 352 (VERAGRRTL) lie on the Cytoplasmic side of the membrane. A helical transmembrane segment spans residues 353-373 (HLLGLAGMCGCAILMTVALLL). Residues 374–384 (LERVPAMSYVS) lie on the Extracellular side of the membrane. A helical transmembrane segment spans residues 385–405 (IVAIFGFVAFFEIGPGPIPWF). 2 residues coordinate D-glucose: Glu-396 and Trp-404. Residues 406 to 416 (IVAELFSQGPR) are Cytoplasmic-facing. The helical transmembrane segment at 417–437 (PAAMAVAGFSNWTCNFIVGMG) threads the bilayer. Topologically, residues 438 to 444 (FQYVADA) are extracellular. Residues 445-465 (MGPYVFLLFAVLLLGFFIFTF) form a helical membrane-spanning segment. At 466–508 (LKVPETRGRTFDQISAAFRRTPSLLEQEVKPSTELEYLGPDEN) the chain is on the cytoplasmic side. Thr-486 is modified (phosphothreonine). At Ser-488 the chain carries Phosphoserine. Positions 489-490 (LL) match the Dileucine internalization motif motif.

It belongs to the major facilitator superfamily. Sugar transporter (TC 2.A.1.1) family. Glucose transporter subfamily. Binds to DAXX. Interacts via its N-terminus with SRFBP1. Interacts with NDUFA9. Interacts with TRARG1; the interaction is required for proper SLC2A4 recycling after insulin stimulation. Post-translationally, sumoylated. Palmitoylated. Palmitoylation by ZDHHC7 controls the insulin-dependent translocation of GLUT4 to the plasma membrane. As to expression, expressed in skeletal and cardiac muscles. Expressed in brown and white adipose tissues.

Its subcellular location is the cell membrane. It localises to the endomembrane system. The protein localises to the cytoplasm. It is found in the perinuclear region. The enzyme catalyses D-glucose(out) = D-glucose(in). Functionally, insulin-regulated facilitative glucose transporter, which plays a key role in removal of glucose from circulation. Response to insulin is regulated by its intracellular localization: in the absence of insulin, it is efficiently retained intracellularly within storage compartments in muscle and fat cells. Upon insulin stimulation, translocates from these compartments to the cell surface where it transports glucose from the extracellular milieu into the cell. In Mus musculus (Mouse), this protein is Solute carrier family 2, facilitated glucose transporter member 4.